We begin with the raw amino-acid sequence, 357 residues long: Peptide chain release factor 1 (357 aa).

Gln234 carries the post-translational modification N5-methylglutamine.

It belongs to the prokaryotic/mitochondrial release factor family. In terms of processing, methylated by PrmC. Methylation increases the termination efficiency of RF1.

It is found in the cytoplasm. Functionally, peptide chain release factor 1 directs the termination of translation in response to the peptide chain termination codons UAG and UAA. The polypeptide is Peptide chain release factor 1 (prfA) (Lactococcus lactis subsp. lactis (strain IL1403) (Streptococcus lactis)).